Reading from the N-terminus, the 419-residue chain is Glutamate dehydrogenase (419 aa).

Residue Lys-105 is part of the active site. 219–225 provides a ligand contact to NAD(+); sequence GYGNAGY.

The protein belongs to the Glu/Leu/Phe/Val dehydrogenases family. Homohexamer.

The catalysed reaction is L-glutamate + NAD(+) + H2O = 2-oxoglutarate + NH4(+) + NADH + H(+). It carries out the reaction L-glutamate + NADP(+) + H2O = 2-oxoglutarate + NH4(+) + NADPH + H(+). This is Glutamate dehydrogenase (gdhA) from Thermococcus profundus.